The chain runs to 162 residues: Photosystem II extrinsic protein V (162 aa).

Positions 1–26 (MLKRYMLLAVATVFFAFQVLTSTATA) are cleaved as a signal peptide. Residues Cys62, Cys65, His66, and His117 each contribute to the heme c site.

This sequence belongs to the cytochrome c family. PsbV subfamily. As to quaternary structure, PSII is composed of 1 copy each of membrane proteins PsbA, PsbB, PsbC, PsbD, PsbE, PsbF, PsbH, PsbI, PsbJ, PsbK, PsbL, PsbM, PsbT, PsbX, PsbY, PsbZ, Psb30/Ycf12, peripheral proteins PsbO, CyanoQ (PsbQ), PsbU, PsbV and a large number of cofactors. It forms dimeric complexes. Heme c is required as a cofactor.

The protein resides in the cellular thylakoid membrane. Functionally, one of the extrinsic, lumenal subunits of photosystem II (PSII). PSII is a light-driven water plastoquinone oxidoreductase, using light energy to abstract electrons from H(2)O, generating a proton gradient subsequently used for ATP formation. The extrinsic proteins stabilize the structure of photosystem II oxygen-evolving complex (OEC), the ion environment of oxygen evolution and protect the OEC against heat-induced inactivation. Low-potential cytochrome c that plays a role in the OEC of PSII. The protein is Photosystem II extrinsic protein V of Acaryochloris marina (strain MBIC 11017).